Here is a 251-residue protein sequence, read N- to C-terminus: Ribonuclease PH (251 aa).

Phosphate-binding positions include Arg90 and 128–130; that span reads GTR.

The protein belongs to the RNase PH family. As to quaternary structure, homohexameric ring arranged as a trimer of dimers.

The enzyme catalyses tRNA(n+1) + phosphate = tRNA(n) + a ribonucleoside 5'-diphosphate. Its function is as follows. Phosphorolytic 3'-5' exoribonuclease that plays an important role in tRNA 3'-end maturation. Removes nucleotide residues following the 3'-CCA terminus of tRNAs; can also add nucleotides to the ends of RNA molecules by using nucleoside diphosphates as substrates, but this may not be physiologically important. Probably plays a role in initiation of 16S rRNA degradation (leading to ribosome degradation) during starvation. The chain is Ribonuclease PH from Leifsonia xyli subsp. xyli (strain CTCB07).